A 428-amino-acid chain; its full sequence is Tyrosine--tRNA ligase (428 aa).

Residue Y41 participates in L-tyrosine binding. Positions 46 to 55 (PTADSLHLGH) match the 'HIGH' region motif. L-tyrosine contacts are provided by Y179 and Q183. A 'KMSKS' region motif is present at residues 239 to 243 (KFGKT). K242 is an ATP binding site. One can recognise an S4 RNA-binding domain in the interval 361 to 418 (ADLLQALVDSELQPSRGQARKTVASNAVTINGEKQADPEYVFSDSDRLFGRYTLLRRG).

The protein belongs to the class-I aminoacyl-tRNA synthetase family. TyrS type 1 subfamily. In terms of assembly, homodimer.

The protein resides in the cytoplasm. It catalyses the reaction tRNA(Tyr) + L-tyrosine + ATP = L-tyrosyl-tRNA(Tyr) + AMP + diphosphate + H(+). Its function is as follows. Catalyzes the attachment of tyrosine to tRNA(Tyr) in a two-step reaction: tyrosine is first activated by ATP to form Tyr-AMP and then transferred to the acceptor end of tRNA(Tyr). This chain is Tyrosine--tRNA ligase, found in Klebsiella pneumoniae subsp. pneumoniae (strain ATCC 700721 / MGH 78578).